A 498-amino-acid polypeptide reads, in one-letter code: Lysine--tRNA ligase (498 aa).

Mg(2+) is bound by residues Glu-408 and Glu-415.

Belongs to the class-II aminoacyl-tRNA synthetase family. As to quaternary structure, homodimer. Requires Mg(2+) as cofactor.

It is found in the cytoplasm. The enzyme catalyses tRNA(Lys) + L-lysine + ATP = L-lysyl-tRNA(Lys) + AMP + diphosphate. The chain is Lysine--tRNA ligase from Pediococcus pentosaceus (strain ATCC 25745 / CCUG 21536 / LMG 10740 / 183-1w).